Here is a 201-residue protein sequence, read N- to C-terminus: Cytochrome c oxidase assembly protein CtaG (201 aa).

Topologically, residues 1–12 are cytoplasmic; that stretch reads MTDQGENEKKQR. The chain crosses the membrane as a helical; Signal-anchor for type II membrane protein span at residues 13 to 35; sequence RSNATIAVACLSFFVCMIGAAYA. At 36–201 the chain is on the periplasmic side; the sequence is SVPLYRIFCQ…KAVGSTRNGG (166 aa).

This sequence belongs to the COX11/CtaG family.

The protein resides in the cell inner membrane. In terms of biological role, exerts its effect at some terminal stage of cytochrome c oxidase synthesis, probably by being involved in the insertion of the copper B into subunit I. The sequence is that of Cytochrome c oxidase assembly protein CtaG from Brucella suis biovar 1 (strain 1330).